The sequence spans 365 residues: Glycine oxidase (365 aa).

FAD contacts are provided by residues 12 to 13 (VI), 32 to 33 (DQ), 40 to 41 (SS), 45 to 47 (GGI), and Ile173. Residue Arg302 coordinates substrate. 327-333 (HYRNGLV) lines the FAD pocket.

This sequence belongs to the DAO family. ThiO subfamily. Monomer. The cofactor is FAD.

It carries out the reaction glycine + O2 + H2O = glyoxylate + H2O2 + NH4(+). The enzyme catalyses sarcosine + O2 + H2O = methylamine + glyoxylate + H2O2. The protein operates within cofactor biosynthesis; thiamine diphosphate biosynthesis. Catalyzes the oxidation of glycine, leading to glyoxyl imine and hydrogen peroxide as primary products; glyoxyl imine is used for the biosynthesis of the thiazole ring of thiamine. Otherwise, glyoxyl imine is spontaneously hydrolyzed in water to produce glyoxylate and ammonia. Can also use sarcosine (N-methylglycine) as substrate, and, to a lesser extent, N-ethylglycine and D-proline. Has no activity towards other amino-acids D-Asp, D-Glu, D-Gln, D-His, D-Leu, D-Lys, D-ornithine, D-Trp, D-Val, L-Ala, L-Asp, L-Glu, L-His, L-Leu, L-Lys, L-Met and L-Pro. This is Glycine oxidase from Pseudomonas putida (strain ATCC 47054 / DSM 6125 / CFBP 8728 / NCIMB 11950 / KT2440).